A 1171-amino-acid chain; its full sequence is DExH-box ATP-dependent RNA helicase DExH15 chloroplastic (1171 aa).

The transit peptide at 1-58 (MNTLPVVSLTASSSFKFFHFPSLHRSLSHSPNFSFTKSLILNPNHLSFKSTLNSLSPS) directs the protein to the chloroplast. The segment covering 53 to 62 (NSLSPSQSQL) has biased composition (polar residues). Residues 53-111 (NSLSPSQSQLYEEEDDEEEEEEDEDDDDEAADEYDNISDEIRNSDDDDDDEETEFSVDL) are disordered. 2 stretches are compositionally biased toward acidic residues: residues 63–90 (YEEE…DNIS) and 97–107 (DDDDDDEETEF). In terms of domain architecture, Helicase ATP-binding spans 163 to 327 (IEAFLRGSSV…WIGEIHGKTE (165 aa)). 176–183 (APTSSGKT) contacts ATP. The DEVH box motif lies at 275–278 (DEVH). In terms of domain architecture, Helicase C-terminal spans 424–620 (QISDTLWHLQ…ASYGMVLNLV (197 aa)).

It belongs to the DExH box helicase family.

It localises to the plastid. The protein localises to the chloroplast. It is found in the cytoplasmic granule. It carries out the reaction ATP + H2O = ADP + phosphate + H(+). Functionally, RNA helicase involved in group II intron splicing. Essential protein required during embryogenesis. Involved in post-transcriptional gene silencing. Modulates the determination of cell fate. Necessary for normal plasmodesmata (PD) development and aperture regulation. This is DExH-box ATP-dependent RNA helicase DExH15 chloroplastic (ISE2) from Arabidopsis thaliana (Mouse-ear cress).